We begin with the raw amino-acid sequence, 438 residues long: 3-phosphoshikimate 1-carboxyvinyltransferase 1 (438 aa).

The 3-phosphoshikimate site is built by lysine 30, serine 31, and arginine 35. Residue lysine 30 participates in phosphoenolpyruvate binding. Phosphoenolpyruvate is bound by residues glycine 104 and arginine 132. 3-phosphoshikimate-binding residues include serine 178, serine 179, glutamine 180, serine 207, glutamate 326, and histidine 353. A phosphoenolpyruvate-binding site is contributed by glutamine 180. Catalysis depends on glutamate 326, which acts as the Proton acceptor. 3 residues coordinate phosphoenolpyruvate: arginine 357, arginine 398, and lysine 423.

The protein belongs to the EPSP synthase family. Monomer.

The protein localises to the cytoplasm. It carries out the reaction 3-phosphoshikimate + phosphoenolpyruvate = 5-O-(1-carboxyvinyl)-3-phosphoshikimate + phosphate. It participates in metabolic intermediate biosynthesis; chorismate biosynthesis; chorismate from D-erythrose 4-phosphate and phosphoenolpyruvate: step 6/7. In terms of biological role, catalyzes the transfer of the enolpyruvyl moiety of phosphoenolpyruvate (PEP) to the 5-hydroxyl of shikimate-3-phosphate (S3P) to produce enolpyruvyl shikimate-3-phosphate and inorganic phosphate. This is 3-phosphoshikimate 1-carboxyvinyltransferase 1 from Streptomyces coelicolor (strain ATCC BAA-471 / A3(2) / M145).